Here is a 257-residue protein sequence, read N- to C-terminus: Thiazole synthase (257 aa).

The Schiff-base intermediate with DXP role is filled by K96. Residues G157, 184–185, and 206–207 each bind 1-deoxy-D-xylulose 5-phosphate; these read AG and NT.

Belongs to the ThiG family. In terms of assembly, homotetramer. Forms heterodimers with either ThiH or ThiS.

It localises to the cytoplasm. The catalysed reaction is [ThiS sulfur-carrier protein]-C-terminal-Gly-aminoethanethioate + 2-iminoacetate + 1-deoxy-D-xylulose 5-phosphate = [ThiS sulfur-carrier protein]-C-terminal Gly-Gly + 2-[(2R,5Z)-2-carboxy-4-methylthiazol-5(2H)-ylidene]ethyl phosphate + 2 H2O + H(+). Its pathway is cofactor biosynthesis; thiamine diphosphate biosynthesis. In terms of biological role, catalyzes the rearrangement of 1-deoxy-D-xylulose 5-phosphate (DXP) to produce the thiazole phosphate moiety of thiamine. Sulfur is provided by the thiocarboxylate moiety of the carrier protein ThiS. In vitro, sulfur can be provided by H(2)S. This Rhizobium meliloti (strain 1021) (Ensifer meliloti) protein is Thiazole synthase.